The chain runs to 1870 residues: Non-reducing polyketide synthase pkgA (1870 aa).

Residues 40 to 279 (IQDLIRRLHR…SRHSALPISG (240 aa)) form an N-terminal acylcarrier protein transacylase domain (SAT) region. A Ketosynthase family 3 (KS3) domain is found at 416–838 (DAKLAVVGMA…GGNTTLLLED (423 aa)). A disordered region spans residues 453-492 (PPDRFDLDAHFDPSGEKENTTTKGSQSNRPLSRQAEQTDP). Residues 455 to 472 (DRFDLDAHFDPSGEKENT) are compositionally biased toward basic and acidic residues. Over residues 473–492 (TTKGSQSNRPLSRQAEQTDP) the composition is skewed to polar residues. Active-site for beta-ketoacyl synthase activity residues include Cys-577, His-712, and His-755. Positions 947-1282 (AFSGQGCLYH…QSFASLRRGD (336 aa)) are malonyl-CoA:ACP transacylase (MAT) domain. Residues 1004 to 1027 (RCPHRESTPSSDASHDSNTNRTST) are disordered. Over residues 1011-1027 (TPSSDASHDSNTNRTST) the composition is skewed to polar residues. Residues 1364 to 1704 (TSSVQQIIFE…PRALMPVLFP (341 aa)) are product template (PT) domain. The N-terminal hotdog fold stretch occupies residues 1368-1502 (QQIIFEEYDE…ATVCYEEAQD (135 aa)). One can recognise a PKS/mFAS DH domain in the interval 1368–1700 (QQIIFEEYDE…FKAVPRALMP (333 aa)). The active-site Proton acceptor; for dehydratase activity is His-1400. The segment at 1538 to 1700 (KGGPRVNNFF…FKAVPRALMP (163 aa)) is C-terminal hotdog fold. Asp-1602 (proton donor; for dehydratase activity) is an active-site residue. The Carrier domain maps to 1795–1870 (QSQNAQATAC…VQDLVTWLSK (76 aa)). Ser-1832 carries the post-translational modification O-(pantetheine 4'-phosphoryl)serine.

Pantetheine 4'-phosphate serves as cofactor.

It catalyses the reaction holo-[ACP] + 6 malonyl-CoA + acetyl-CoA + 6 H(+) = 3,5,7,9,11,13-hexaoxotetradecanoyl-[ACP] + 6 CO2 + 7 CoA. The catalysed reaction is holo-[ACP] + 5 malonyl-CoA + acetyl-CoA + 5 H(+) = 3,5,7,9,11-pentaoxododecanoyl-[ACP] + 5 CO2 + 6 CoA. Its pathway is secondary metabolite biosynthesis. Non-reducing polyketide synthase; part of the pkg gene cluster that mediates the biosynthesis of dihydrocitreoisocoumarin and 6,8-dihydroxy-3-(2-oxopropyl)-isocoumarin. The non-reducing polyketide synthase pkgA performs the condensation of one acetyl-CoA starter unit with 6 and 5 malonyl-CoA units, respectively. As pkgA lacks a releasing domain, the thioesterase pkgB is necessary to break the thioester bond and release dihydrocitreoisocoumarin and 6,8-dihydroxy-3-(2-oxopropyl)-isocoumarin from pkgA. The polypeptide is Non-reducing polyketide synthase pkgA (Emericella nidulans (strain FGSC A4 / ATCC 38163 / CBS 112.46 / NRRL 194 / M139) (Aspergillus nidulans)).